Reading from the N-terminus, the 948-residue chain is Phosphoenolpyruvate carboxylase (948 aa).

Active-site residues include histidine 138 and lysine 610.

Belongs to the PEPCase type 1 family. Requires Mg(2+) as cofactor.

The enzyme catalyses oxaloacetate + phosphate = phosphoenolpyruvate + hydrogencarbonate. Its function is as follows. Forms oxaloacetate, a four-carbon dicarboxylic acid source for the tricarboxylic acid cycle. This chain is Phosphoenolpyruvate carboxylase, found in Streptococcus sanguinis (strain SK36).